A 437-amino-acid polypeptide reads, in one-letter code: GTPase Der (437 aa).

2 consecutive EngA-type G domains span residues 4-167 and 176-351; these read PVIA…PEDE and IRIS…ENHN. GTP contacts are provided by residues 10–17, 57–61, 119–122, 182–189, 229–233, and 294–297; these read GRPNVGKS, DTGGI, NKID, DTAGM, and NKWD. Positions 352-436 constitute a KH-like domain; the sequence is LRVPTHVLND…PIKIIARKKN (85 aa).

It belongs to the TRAFAC class TrmE-Era-EngA-EngB-Septin-like GTPase superfamily. EngA (Der) GTPase family. In terms of assembly, associates with the 50S ribosomal subunit.

Its function is as follows. GTPase that plays an essential role in the late steps of ribosome biogenesis. In Halalkalibacterium halodurans (strain ATCC BAA-125 / DSM 18197 / FERM 7344 / JCM 9153 / C-125) (Bacillus halodurans), this protein is GTPase Der.